The chain runs to 338 residues: Ketol-acid reductoisomerase (NADP(+)) (338 aa).

In terms of domain architecture, KARI N-terminal Rossmann spans 1–181; it reads MKVFYDKDAD…GGGRAGIIET (181 aa). NADP(+) contacts are provided by residues 24–27, Arg47, and Ser52; that span reads YGSQ. Residue His107 is part of the active site. NADP(+) is bound at residue Gly133. In terms of domain architecture, KARI C-terminal knotted spans 182 to 327; the sequence is NFREETETDL…EKLRAMMPWI (146 aa). Positions 190, 194, 226, and 230 each coordinate Mg(2+). Ser251 provides a ligand contact to substrate.

Belongs to the ketol-acid reductoisomerase family. The cofactor is Mg(2+).

It catalyses the reaction (2R)-2,3-dihydroxy-3-methylbutanoate + NADP(+) = (2S)-2-acetolactate + NADPH + H(+). It carries out the reaction (2R,3R)-2,3-dihydroxy-3-methylpentanoate + NADP(+) = (S)-2-ethyl-2-hydroxy-3-oxobutanoate + NADPH + H(+). It participates in amino-acid biosynthesis; L-isoleucine biosynthesis; L-isoleucine from 2-oxobutanoate: step 2/4. It functions in the pathway amino-acid biosynthesis; L-valine biosynthesis; L-valine from pyruvate: step 2/4. Functionally, involved in the biosynthesis of branched-chain amino acids (BCAA). Catalyzes an alkyl-migration followed by a ketol-acid reduction of (S)-2-acetolactate (S2AL) to yield (R)-2,3-dihydroxy-isovalerate. In the isomerase reaction, S2AL is rearranged via a Mg-dependent methyl migration to produce 3-hydroxy-3-methyl-2-ketobutyrate (HMKB). In the reductase reaction, this 2-ketoacid undergoes a metal-dependent reduction by NADPH to yield (R)-2,3-dihydroxy-isovalerate. This Cupriavidus pinatubonensis (strain JMP 134 / LMG 1197) (Cupriavidus necator (strain JMP 134)) protein is Ketol-acid reductoisomerase (NADP(+)).